We begin with the raw amino-acid sequence, 350 residues long: Phosphotriesterase-related protein (350 aa).

A divalent metal cation is bound by residues histidine 22, histidine 24, glutamate 169, histidine 201, histidine 230, and aspartate 298.

It belongs to the metallo-dependent hydrolases superfamily. Phosphotriesterase family. A divalent metal cation is required as a cofactor.

The polypeptide is Phosphotriesterase-related protein (Drosophila willistoni (Fruit fly)).